Here is a 151-residue protein sequence, read N- to C-terminus: Large ribosomal subunit protein bL9 (151 aa).

This sequence belongs to the bacterial ribosomal protein bL9 family.

Binds to the 23S rRNA. This is Large ribosomal subunit protein bL9 from Prochlorococcus marinus (strain MIT 9215).